Consider the following 268-residue polypeptide: tRNA pseudouridine synthase A (268 aa).

The Nucleophile role is filled by Asp-52. Tyr-110 lines the substrate pocket.

This sequence belongs to the tRNA pseudouridine synthase TruA family. As to quaternary structure, homodimer.

The catalysed reaction is uridine(38/39/40) in tRNA = pseudouridine(38/39/40) in tRNA. Functionally, formation of pseudouridine at positions 38, 39 and 40 in the anticodon stem and loop of transfer RNAs. The polypeptide is tRNA pseudouridine synthase A (Prochlorococcus marinus (strain MIT 9515)).